The sequence spans 73 residues: Exodeoxyribonuclease 7 small subunit (73 aa).

It belongs to the XseB family. As to quaternary structure, heterooligomer composed of large and small subunits.

It localises to the cytoplasm. It carries out the reaction Exonucleolytic cleavage in either 5'- to 3'- or 3'- to 5'-direction to yield nucleoside 5'-phosphates.. Functionally, bidirectionally degrades single-stranded DNA into large acid-insoluble oligonucleotides, which are then degraded further into small acid-soluble oligonucleotides. The chain is Exodeoxyribonuclease 7 small subunit from Streptococcus mutans serotype c (strain ATCC 700610 / UA159).